Consider the following 99-residue polypeptide: DNA-directed RNA polymerase subunit Rpo11 (99 aa).

Belongs to the archaeal Rpo11/eukaryotic RPB11/RPC19 RNA polymerase subunit family. In terms of assembly, part of the RNA polymerase complex.

The protein localises to the cytoplasm. It carries out the reaction RNA(n) + a ribonucleoside 5'-triphosphate = RNA(n+1) + diphosphate. In terms of biological role, DNA-dependent RNA polymerase (RNAP) catalyzes the transcription of DNA into RNA using the four ribonucleoside triphosphates as substrates. The chain is DNA-directed RNA polymerase subunit Rpo11 from Aeropyrum pernix (strain ATCC 700893 / DSM 11879 / JCM 9820 / NBRC 100138 / K1).